We begin with the raw amino-acid sequence, 227 residues long: Fibrillarin-like rRNA/tRNA 2'-O-methyltransferase (227 aa).

S-adenosyl-L-methionine-binding positions include 86-87 (TT), 105-106 (EF), 130-131 (DA), and 150-153 (DVAQ).

This sequence belongs to the methyltransferase superfamily. Fibrillarin family. As to quaternary structure, interacts with nop5. Component of box C/D small ribonucleoprotein (sRNP) particles that contain rpl7ae, FlpA and nop5, plus a guide RNA. These sRNP particles form homodimers, giving rise to an asymmetric holoenzyme.

Functionally, involved in pre-rRNA and tRNA processing. Utilizes the methyl donor S-adenosyl-L-methionine to catalyze the site-specific 2'-hydroxyl methylation of ribose moieties in rRNA and tRNA. Site specificity is provided by a guide RNA that base pairs with the substrate. Methylation occurs at a characteristic distance from the sequence involved in base pairing with the guide RNA. This is Fibrillarin-like rRNA/tRNA 2'-O-methyltransferase from Pyrococcus furiosus (strain ATCC 43587 / DSM 3638 / JCM 8422 / Vc1).